Reading from the N-terminus, the 355-residue chain is Ion-translocating oxidoreductase complex subunit D (355 aa).

Helical transmembrane passes span 23 to 43 (WVAL…GWGT), 44 to 64 (LVQL…VMLF), 78 to 109 (ALVT…IVIA), and 129 to 149 (VVLL…LPLI). An FMN phosphoryl threonine modification is found at Thr-194. The next 5 helical transmembrane spans lie at 221-241 (FAGV…LILL), 250-270 (IPVG…LFFP), 273-293 (TASP…FFIA), 307-327 (ILFG…GGFP), and 328-348 (DGVA…DYYT).

It belongs to the NqrB/RnfD family. In terms of assembly, the complex is composed of six subunits: RnfA, RnfB, RnfC, RnfD, RnfE and RnfG. FMN serves as cofactor.

The protein resides in the cell inner membrane. Functionally, part of a membrane-bound complex that couples electron transfer with translocation of ions across the membrane. This chain is Ion-translocating oxidoreductase complex subunit D, found in Vibrio vulnificus (strain CMCP6).